The sequence spans 108 residues: Putative DNA-directed RNA polymerase subunit 1 inactive homolog (108 aa).

The sequence is that of Putative DNA-directed RNA polymerase subunit 1 inactive homolog from Acanthamoeba polyphaga (Amoeba).